Reading from the N-terminus, the 671-residue chain is NADH-quinone oxidoreductase subunit G (671 aa).

The 78-residue stretch at 1–78 (MIKLNVDGSE…GMVIHTDTPM (78 aa)) folds into the 2Fe-2S ferredoxin-type domain. [2Fe-2S] cluster-binding residues include Cys34, Cys45, Cys48, and Cys62. The region spanning 78-117 (MVKKAREGVMEFLLINHPLDCPICDQGGECNLQDQAFRYG) is the 4Fe-4S His(Cys)3-ligated-type domain. [4Fe-4S] cluster is bound by residues His94, Cys98, Cys101, Cys107, Cys146, Cys149, Cys152, and Cys196. The 4Fe-4S Mo/W bis-MGD-type domain occupies 215–271 (LKHTASIGVHDAEGSNIRIDSRGDEVMRILPRVNEEINEEWLSDKNRFSYDGLKYQR).

It belongs to the complex I 75 kDa subunit family. [2Fe-2S] cluster is required as a cofactor. The cofactor is [4Fe-4S] cluster.

The enzyme catalyses a quinone + NADH + 5 H(+)(in) = a quinol + NAD(+) + 4 H(+)(out). In terms of biological role, NDH-1 shuttles electrons from NADH, via FMN and iron-sulfur (Fe-S) centers, to quinones in the respiratory chain. Couples the redox reaction to proton translocation (for every two electrons transferred, four hydrogen ions are translocated across the cytoplasmic membrane), and thus conserves the redox energy in a proton gradient. The polypeptide is NADH-quinone oxidoreductase subunit G (nuoG) (Rickettsia conorii (strain ATCC VR-613 / Malish 7)).